The chain runs to 312 residues: Porphobilinogen deaminase (312 aa).

Cys-241 is subject to S-(dipyrrolylmethanemethyl)cysteine.

It belongs to the HMBS family. Monomer. Dipyrromethane is required as a cofactor.

The catalysed reaction is 4 porphobilinogen + H2O = hydroxymethylbilane + 4 NH4(+). The protein operates within porphyrin-containing compound metabolism; protoporphyrin-IX biosynthesis; coproporphyrinogen-III from 5-aminolevulinate: step 2/4. In terms of biological role, tetrapolymerization of the monopyrrole PBG into the hydroxymethylbilane pre-uroporphyrinogen in several discrete steps. This is Porphobilinogen deaminase from Pelotomaculum thermopropionicum (strain DSM 13744 / JCM 10971 / SI).